The chain runs to 608 residues: Albumin 1 (608 aa).

The first 14 residues, 1–14, serve as a signal peptide directing secretion; it reads MQWLSVCSLLVLLS. A propeptide spanning residues 15 to 18 is cleaved from the precursor; sequence VLSR. Albumin domains are found at residues 19-205, 206-398, and 402-600; these read SQAQ…TFQH, AVMK…AGSD, and KITD…KLVS. Intrachain disulfides connect Cys26–Cys72, Cys71–Cys80, Cys93–Cys108, Cys107–Cys118, Cys142–Cys187, Cys186–Cys195, Cys218–Cys264, Cys263–Cys271, Cys283–Cys299, Cys298–Cys309, Cys336–Cys381, Cys380–Cys389, Cys414–Cys460, Cys459–Cys471, Cys484–Cys500, Cys499–Cys510, Cys537–Cys582, and Cys581–Cys590. N-linked (GlcNAc...) asparagine glycosylation is present at Asn501.

The protein belongs to the ALB/AFP/VDB family. In terms of tissue distribution, plasma.

It localises to the secreted. In terms of biological role, binds water, Ca(2+), Na(+), K(+), fatty acids, hormones, bilirubin and drugs. Its main function is the regulation of the colloidal osmotic pressure of blood. The protein is Albumin 1 (alb1) of Salmo salar (Atlantic salmon).